The chain runs to 523 residues: 2-isopropylmalate synthase (523 aa).

Positions Val5 to Trp267 constitute a Pyruvate carboxyltransferase domain. Positions 14, 202, 204, and 238 each coordinate Mn(2+). The regulatory domain stretch occupies residues Arg392–Val523.

This sequence belongs to the alpha-IPM synthase/homocitrate synthase family. LeuA type 1 subfamily. As to quaternary structure, homodimer. It depends on Mn(2+) as a cofactor.

It is found in the cytoplasm. It carries out the reaction 3-methyl-2-oxobutanoate + acetyl-CoA + H2O = (2S)-2-isopropylmalate + CoA + H(+). It participates in amino-acid biosynthesis; L-leucine biosynthesis; L-leucine from 3-methyl-2-oxobutanoate: step 1/4. Functionally, catalyzes the condensation of the acetyl group of acetyl-CoA with 3-methyl-2-oxobutanoate (2-ketoisovalerate) to form 3-carboxy-3-hydroxy-4-methylpentanoate (2-isopropylmalate). The protein is 2-isopropylmalate synthase of Escherichia coli (strain K12 / MC4100 / BW2952).